We begin with the raw amino-acid sequence, 239 residues long: LexA repressor (239 aa).

A DNA-binding region (H-T-H motif) is located at residues 26–46 (FDEMKDALDLASKSGIHRLIT). Residues 84 to 107 (SPSVIEGSLGKPQPVATPAPAKSV) form a disordered region. Catalysis depends on for autocatalytic cleavage activity residues serine 159 and lysine 197.

Belongs to the peptidase S24 family. Homodimer.

It catalyses the reaction Hydrolysis of Ala-|-Gly bond in repressor LexA.. Its function is as follows. Represses a number of genes involved in the response to DNA damage (SOS response), including recA and lexA. In the presence of single-stranded DNA, RecA interacts with LexA causing an autocatalytic cleavage which disrupts the DNA-binding part of LexA, leading to derepression of the SOS regulon and eventually DNA repair. This Rhizobium johnstonii (strain DSM 114642 / LMG 32736 / 3841) (Rhizobium leguminosarum bv. viciae) protein is LexA repressor.